Consider the following 397-residue polypeptide: Acetate kinase (397 aa).

N8 lines the Mg(2+) pocket. K15 lines the ATP pocket. A substrate-binding site is contributed by R90. The active-site Proton donor/acceptor is the D147. 207–211 (HLGAG) is a binding site for ATP. E382 is a binding site for Mg(2+).

Belongs to the acetokinase family. Homodimer. It depends on Mg(2+) as a cofactor. Requires Mn(2+) as cofactor.

It localises to the cytoplasm. The enzyme catalyses acetate + ATP = acetyl phosphate + ADP. It participates in metabolic intermediate biosynthesis; acetyl-CoA biosynthesis; acetyl-CoA from acetate: step 1/2. Functionally, catalyzes the formation of acetyl phosphate from acetate and ATP. Can also catalyze the reverse reaction. This chain is Acetate kinase, found in Lactiplantibacillus plantarum (strain ATCC BAA-793 / NCIMB 8826 / WCFS1) (Lactobacillus plantarum).